Consider the following 374-residue polypeptide: Ribosomal RNA large subunit methyltransferase G (374 aa).

It belongs to the methyltransferase superfamily. RlmG family.

It is found in the cytoplasm. It carries out the reaction guanosine(1835) in 23S rRNA + S-adenosyl-L-methionine = N(2)-methylguanosine(1835) in 23S rRNA + S-adenosyl-L-homocysteine + H(+). In terms of biological role, specifically methylates the guanine in position 1835 (m2G1835) of 23S rRNA. The sequence is that of Ribosomal RNA large subunit methyltransferase G from Photobacterium profundum (strain SS9).